The chain runs to 68 residues: U-reduvitoxin-Pr3a (68 aa).

An N-terminal signal peptide occupies residues 1–22 (MKAGMKLVLVLVIASIALLALA). 3 disulfide bridges follow: cysteine 29-cysteine 47, cysteine 36-cysteine 52, and cysteine 46-cysteine 59.

It belongs to the venom Ptu1-like knottin family. Expressed by the venom gland.

It is found in the secreted. Functionally, binds reversibly and blocks P/Q-type voltage-gated calcium channels (Cav). This is U-reduvitoxin-Pr3a from Platymeris rhadamanthus (Red spot assassin bug).